The following is a 289-amino-acid chain: MYG1 protein CT_386 (289 aa).

It belongs to the MYG1 family.

The protein is MYG1 protein CT_386 of Chlamydia trachomatis serovar D (strain ATCC VR-885 / DSM 19411 / UW-3/Cx).